The chain runs to 354 residues: Probable serine acetyltransferase 2 (354 aa).

It belongs to the transferase hexapeptide repeat family. As to quaternary structure, homomultimer.

The enzyme catalyses L-serine + acetyl-CoA = O-acetyl-L-serine + CoA. It functions in the pathway amino-acid biosynthesis; L-cysteine biosynthesis; L-cysteine from L-serine: step 1/2. The protein is Probable serine acetyltransferase 2 (SAT2) of Oryza sativa subsp. japonica (Rice).